A 761-amino-acid polypeptide reads, in one-letter code: 5-methyltetrahydropteroyltriglutamate--homocysteine methyltransferase (761 aa).

5-methyltetrahydropteroyltri-L-glutamate-binding positions include 16–19 and Lys-118; that span reads RELK. Residues 436–438 and Glu-489 contribute to the L-homocysteine site; that span reads IGS. L-methionine contacts are provided by residues 436-438 and Glu-489; that span reads IGS. Residues 520–521 and Trp-566 contribute to the 5-methyltetrahydropteroyltri-L-glutamate site; that span reads RC. Position 604 (Asp-604) interacts with L-homocysteine. Asp-604 serves as a coordination point for L-methionine. 5-methyltetrahydropteroyltri-L-glutamate is bound at residue Glu-610. Zn(2+)-binding residues include His-646, Cys-648, and Glu-670. The Proton donor role is filled by His-699. Cys-731 lines the Zn(2+) pocket.

The protein belongs to the vitamin-B12 independent methionine synthase family. Zn(2+) serves as cofactor.

The enzyme catalyses 5-methyltetrahydropteroyltri-L-glutamate + L-homocysteine = tetrahydropteroyltri-L-glutamate + L-methionine. It participates in amino-acid biosynthesis; L-methionine biosynthesis via de novo pathway; L-methionine from L-homocysteine (MetE route): step 1/1. Functionally, catalyzes the transfer of a methyl group from 5-methyltetrahydrofolate to homocysteine resulting in methionine formation. In Vibrio cholerae serotype O1 (strain ATCC 39315 / El Tor Inaba N16961), this protein is 5-methyltetrahydropteroyltriglutamate--homocysteine methyltransferase.